The following is a 283-amino-acid chain: Myeloid differentiation primary response protein MyD88-A (283 aa).

The region spanning 27–105 (RLCLYLNPDA…DILTDLGPLI (79 aa)) is the Death domain. The interval 106–143 (EADCMKYLEKKHVPLPIQDDKVDSSEQYRITKSDDPYG) is intermediate domain. Residues 147–281 (ETFDAFICYC…WFWDKLAKAL (135 aa)) enclose the TIR domain.

The protein localises to the cytoplasm. Functionally, adapter protein involved in the Toll-like receptor and IL-1 receptor signaling pathway in the innate immune response. Activates expression of target genes in the Spemann organizer region during early embryonic development. Is required for normal axis formation. The protein is Myeloid differentiation primary response protein MyD88-A (myd88-a) of Xenopus laevis (African clawed frog).